We begin with the raw amino-acid sequence, 292 residues long: Ribosomal RNA small subunit methyltransferase A (292 aa).

Residues N28, L30, G55, E76, D101, and N126 each coordinate S-adenosyl-L-methionine.

This sequence belongs to the class I-like SAM-binding methyltransferase superfamily. rRNA adenine N(6)-methyltransferase family. RsmA subfamily.

The protein resides in the cytoplasm. The catalysed reaction is adenosine(1518)/adenosine(1519) in 16S rRNA + 4 S-adenosyl-L-methionine = N(6)-dimethyladenosine(1518)/N(6)-dimethyladenosine(1519) in 16S rRNA + 4 S-adenosyl-L-homocysteine + 4 H(+). In terms of biological role, specifically dimethylates two adjacent adenosines (A1518 and A1519) in the loop of a conserved hairpin near the 3'-end of 16S rRNA in the 30S particle. May play a critical role in biogenesis of 30S subunits. The polypeptide is Ribosomal RNA small subunit methyltransferase A (Bacillus anthracis).